A 177-amino-acid chain; its full sequence is Large ribosomal subunit protein uL6 (177 aa).

It belongs to the universal ribosomal protein uL6 family. In terms of assembly, part of the 50S ribosomal subunit.

This protein binds to the 23S rRNA, and is important in its secondary structure. It is located near the subunit interface in the base of the L7/L12 stalk, and near the tRNA binding site of the peptidyltransferase center. The chain is Large ribosomal subunit protein uL6 from Shewanella denitrificans (strain OS217 / ATCC BAA-1090 / DSM 15013).